Here is a 204-residue protein sequence, read N- to C-terminus: UPF0637 protein SaurJH9_1166 (204 aa).

It belongs to the UPF0637 family.

The protein is UPF0637 protein SaurJH9_1166 of Staphylococcus aureus (strain JH9).